The primary structure comprises 325 residues: Replication factor C small subunit (325 aa).

Residue 54 to 61 participates in ATP binding; sequence GPAGTGKT.

The protein belongs to the activator 1 small subunits family. RfcS subfamily. As to quaternary structure, heteromultimer composed of small subunits (RfcS) and large subunits (RfcL).

Part of the RFC clamp loader complex which loads the PCNA sliding clamp onto DNA. This chain is Replication factor C small subunit, found in Haloarcula marismortui (strain ATCC 43049 / DSM 3752 / JCM 8966 / VKM B-1809) (Halobacterium marismortui).